The primary structure comprises 268 residues: Casein kinase II subunit beta (268 aa).

The interval 222–268 (LSNNNQNNQNNNINNNNNNNNNNNNNNNNNNNNQQNNNNQQNNNTNK) is disordered. Over residues 224–268 (NNNQNNQNNNINNNNNNNNNNNNNNNNNNNNQQNNNNQQNNNTNK) the composition is skewed to low complexity.

Belongs to the casein kinase 2 subunit beta family. As to quaternary structure, casein kinase II/CK2 is a tetramer composed of two alpha subunit and two beta subunits.

Regulatory subunit of casein kinase II/CK2. As part of the kinase complex regulates the basal catalytic activity of the alpha subunit a constitutively active serine/threonine-protein kinase that phosphorylates a large number of substrates containing acidic residues C-terminal to the phosphorylated serine or threonine. In Dictyostelium discoideum (Social amoeba), this protein is Casein kinase II subunit beta (csnk2b).